Here is a 273-residue protein sequence, read N- to C-terminus: 4-hydroxy-tetrahydrodipicolinate reductase 1 (273 aa).

Residues 13-18 (GAAGRM) and E39 each bind NAD(+). Residue R40 participates in NADP(+) binding. NAD(+) contacts are provided by residues 103–105 (GTT) and 127–130 (SGNM). H161 serves as the catalytic Proton donor/acceptor. H162 contributes to the (S)-2,3,4,5-tetrahydrodipicolinate binding site. The active-site Proton donor is the K165. 171–172 (GT) contacts (S)-2,3,4,5-tetrahydrodipicolinate.

The protein belongs to the DapB family.

It is found in the cytoplasm. The enzyme catalyses (S)-2,3,4,5-tetrahydrodipicolinate + NAD(+) + H2O = (2S,4S)-4-hydroxy-2,3,4,5-tetrahydrodipicolinate + NADH + H(+). The catalysed reaction is (S)-2,3,4,5-tetrahydrodipicolinate + NADP(+) + H2O = (2S,4S)-4-hydroxy-2,3,4,5-tetrahydrodipicolinate + NADPH + H(+). The protein operates within amino-acid biosynthesis; L-lysine biosynthesis via DAP pathway; (S)-tetrahydrodipicolinate from L-aspartate: step 4/4. Catalyzes the conversion of 4-hydroxy-tetrahydrodipicolinate (HTPA) to tetrahydrodipicolinate. In Mesorhizobium japonicum (strain LMG 29417 / CECT 9101 / MAFF 303099) (Mesorhizobium loti (strain MAFF 303099)), this protein is 4-hydroxy-tetrahydrodipicolinate reductase 1.